Reading from the N-terminus, the 137-residue chain is Putative pre-16S rRNA nuclease (137 aa).

The protein belongs to the YqgF nuclease family.

It localises to the cytoplasm. Could be a nuclease involved in processing of the 5'-end of pre-16S rRNA. This chain is Putative pre-16S rRNA nuclease, found in Flavobacterium psychrophilum (strain ATCC 49511 / DSM 21280 / CIP 103535 / JIP02/86).